The following is a 1101-amino-acid chain: Nuclear pore complex protein NUP107 (1101 aa).

Belongs to the nucleoporin Nup84/Nup107 family. In terms of assembly, part of the nuclear pore complex (NPC). The NPC has an eight-fold symmetrical structure comprising a central transport channel and two rings, the cytoplasmic and nuclear rings, to which eight filaments are attached. The cytoplasmic filaments have loose ends, while the nuclear filaments are joined in a distal ring, forming a nuclear basket. NPCs are highly dynamic in configuration and composition, and can be devided in 3 subcomplexes, the NUP62 subcomplex, the NUP107-160 subcomplex and the NUP93 subcomplex, containing approximately 30 different nucleoporin proteins.

Its subcellular location is the nucleus envelope. The protein localises to the nucleus. It localises to the nuclear pore complex. The chain is Nuclear pore complex protein NUP107 from Arabidopsis thaliana (Mouse-ear cress).